The sequence spans 317 residues: N-acetylmuramoyl-L-alanine amidase XlyB (317 aa).

A signal peptide spans 1–39; sequence MSIPVKKNLVSEAKYALKCPNAMSAEYITIHNTANDASA. Positions 40-142 constitute an N-acetylmuramoyl-L-alanine amidase domain; it reads ANEISYMIGN…QDWSGKYCPH (103 aa). Positions 177–221 constitute a LysM domain; the sequence is SEYHVKKGDTLSGIAASHGASVKTLQSINHITDPNHIKIGQVIKL.

Belongs to the N-acetylmuramoyl-L-alanine amidase 2 family.

It is found in the secreted. It catalyses the reaction Hydrolyzes the link between N-acetylmuramoyl residues and L-amino acid residues in certain cell-wall glycopeptides.. Functionally, autolysins are involved in some important biological processes such as cell separation, cell-wall turnover, competence for genetic transformation, formation of the flagella and sporulation. The protein is N-acetylmuramoyl-L-alanine amidase XlyB (xlyB) of Bacillus subtilis (strain 168).